The chain runs to 99 residues: Putative pterin-4-alpha-carbinolamine dehydratase (99 aa).

Belongs to the pterin-4-alpha-carbinolamine dehydratase family.

It catalyses the reaction (4aS,6R)-4a-hydroxy-L-erythro-5,6,7,8-tetrahydrobiopterin = (6R)-L-erythro-6,7-dihydrobiopterin + H2O. In Synechococcus sp. (strain CC9311), this protein is Putative pterin-4-alpha-carbinolamine dehydratase.